The primary structure comprises 169 residues: Gametocyte-specific factor 1-like (169 aa).

2 consecutive CHHC U11-48K-type zinc fingers follow at residues 6-33 and 40-67; these read LETC…RRKN and MASC…VNKS. Positions 9, 15, 25, 29, 43, 49, 59, and 63 each coordinate Zn(2+). 2 disordered regions span residues 67-103 and 131-169; these read STME…LPNP and SDTR…LLKA. Basic and acidic residues predominate over residues 131–158; sequence SDTRESETDDHNPIPDCPRRRSSDRESE.

Belongs to the UPF0224 (FAM112) family.

This chain is Gametocyte-specific factor 1-like (GTSF1L), found in Bos taurus (Bovine).